We begin with the raw amino-acid sequence, 358 residues long: Chitin synthase export chaperone (358 aa).

A run of 7 helical transmembrane segments spans residues 49–69, 88–108, 117–137, 159–179, 185–205, 220–240, and 250–270; these read IIFQGAASVMHIVALVMTVVM, FFYLYMILTFLSLCIDAGVIP, FVAVQAGLASALVTCLVINGF, FVAFVISFLVGLATFKSWAGL, VGIFVVLYFLNALQLLLYVVM, LGDIAFGLFFFIAGQVILYAF, and HYLDGLFFATTCNLLAVMMVY. A disordered region spans residues 321 to 358; sequence ASGPGTGSGASASGYEGGHHRRESHGYTPSPNRQSLRY. Polar residues predominate over residues 347-358; the sequence is YTPSPNRQSLRY.

Belongs to the CHS7 family. Interacts with chs-3.

It is found in the endoplasmic reticulum membrane. Its function is as follows. Chaperone required for the export of the chitin synthase chs-3 from the endoplasmic reticulum. In Neurospora crassa (strain ATCC 24698 / 74-OR23-1A / CBS 708.71 / DSM 1257 / FGSC 987), this protein is Chitin synthase export chaperone (csc-1).